The chain runs to 245 residues: Photosystem II protein PSBS2 (245 aa).

The transit peptide at 1 to 25 directs the protein to the chloroplast; it reads MAMTLSTKAFAQRGVSARKNTVRVY. 4 consecutive transmembrane segments (helical) span residues 72–92, 108–128, 185–205, and 217–237; these read LFVG…EILT, GIEV…AAVL, LGFA…LAQF, and EFGL…EGSG.

This sequence belongs to the ELIP/psbS family.

It is found in the plastid. The protein localises to the chloroplast thylakoid membrane. Required for non-photochemical quenching (NPQ), a mechanism that converts and dissipates the harmful excess absorbed light energy into heat and protect the photosynthetic apparatus from photo-oxidative damage. Seems involved in the activation of NPQ, possibly by promoting conformational changes required for activation of LHCSR3-dependent quenching in the antenna of photosystem II (PSII). In Chlamydomonas reinhardtii (Chlamydomonas smithii), this protein is Photosystem II protein PSBS2.